A 178-amino-acid chain; its full sequence is Ribosome maturation factor RimM (178 aa).

The PRC barrel domain occupies 101–178 (DGEYYWYQLQ…EMQVDWDADF (78 aa)).

The protein belongs to the RimM family. In terms of assembly, binds ribosomal protein uS19.

The protein resides in the cytoplasm. In terms of biological role, an accessory protein needed during the final step in the assembly of 30S ribosomal subunit, possibly for assembly of the head region. Essential for efficient processing of 16S rRNA. May be needed both before and after RbfA during the maturation of 16S rRNA. It has affinity for free ribosomal 30S subunits but not for 70S ribosomes. The polypeptide is Ribosome maturation factor RimM (Stutzerimonas stutzeri (strain A1501) (Pseudomonas stutzeri)).